We begin with the raw amino-acid sequence, 286 residues long: ATP synthase gamma chain (286 aa).

The protein belongs to the ATPase gamma chain family. As to quaternary structure, F-type ATPases have 2 components, CF(1) - the catalytic core - and CF(0) - the membrane proton channel. CF(1) has five subunits: alpha(3), beta(3), gamma(1), delta(1), epsilon(1). CF(0) has three main subunits: a, b and c.

The protein localises to the cell inner membrane. Produces ATP from ADP in the presence of a proton gradient across the membrane. The gamma chain is believed to be important in regulating ATPase activity and the flow of protons through the CF(0) complex. This chain is ATP synthase gamma chain, found in Solibacter usitatus (strain Ellin6076).